Reading from the N-terminus, the 167-residue chain is Interferon gamma (167 aa).

Positions M1 to C23 are cleaved as a signal peptide. The residue at position 24 (Q24) is a Pyrrolidone carboxylic acid. N-linked (GlcNAc...) asparagine glycans are attached at residues N41, N108, and N117.

It belongs to the type II (or gamma) interferon family. Homodimer. Interacts with IFNGR1 (via extracellular domain); this interaction promotes IFNGR1 dimerization. As to expression, released primarily from activated T lymphocytes.

Its subcellular location is the secreted. In terms of biological role, type II interferon produced by immune cells such as T-cells and NK cells that plays crucial roles in antimicrobial, antiviral, and antitumor responses by activating effector immune cells and enhancing antigen presentation. Primarily signals through the JAK-STAT pathway after interaction with its receptor IFNGR1 to affect gene regulation. Upon IFNG binding, IFNGR1 intracellular domain opens out to allow association of downstream signaling components JAK2, JAK1 and STAT1, leading to STAT1 activation, nuclear translocation and transcription of IFNG-regulated genes. Many of the induced genes are transcription factors such as IRF1 that are able to further drive regulation of a next wave of transcription. Plays a role in class I antigen presentation pathway by inducing a replacement of catalytic proteasome subunits with immunoproteasome subunits. In turn, increases the quantity, quality, and repertoire of peptides for class I MHC loading. Increases the efficiency of peptide generation also by inducing the expression of activator PA28 that associates with the proteasome and alters its proteolytic cleavage preference. Up-regulates as well MHC II complexes on the cell surface by promoting expression of several key molecules such as cathepsins B/CTSB, H/CTSH, and L/CTSL. Participates in the regulation of hematopoietic stem cells during development and under homeostatic conditions by affecting their development, quiescence, and differentiation. The sequence is that of Interferon gamma (IFNG) from Oryctolagus cuniculus (Rabbit).